The following is a 103-amino-acid chain: Small ribosomal subunit protein uS10 (103 aa).

This sequence belongs to the universal ribosomal protein uS10 family. As to quaternary structure, part of the 30S ribosomal subunit.

Involved in the binding of tRNA to the ribosomes. The polypeptide is Small ribosomal subunit protein uS10 (Natranaerobius thermophilus (strain ATCC BAA-1301 / DSM 18059 / JW/NM-WN-LF)).